Here is a 240-residue protein sequence, read N- to C-terminus: Proteasome subunit beta type-1 (240 aa).

Met1 carries the N-acetylmethionine modification. Positions 1–27 are excised as a propeptide; it reads MLSTAAYRDVERELGMGPHGSAGPVQL. Ser57 carries O-linked (GlcNAc) serine glycosylation. Phosphoserine occurs at positions 61 and 67. Position 149 is a phosphotyrosine (Tyr149). Ser161 is modified (phosphoserine). Residue Lys203 is modified to N6-acetyllysine. O-linked (GlcNAc) serine glycosylation is present at Ser208.

This sequence belongs to the peptidase T1B family. As to quaternary structure, the 26S proteasome consists of a 20S proteasome core and two 19S regulatory subunits. The 20S proteasome core is a barrel-shaped complex made of 28 subunits that are arranged in four stacked rings. The two outer rings are each formed by seven alpha subunits, and the two inner rings are formed by seven beta subunits. The proteolytic activity is exerted by three beta-subunits PSMB5, PSMB6 and PSMB7. Interacts with SERPINB2. Interacts with RFPL4A. As to expression, detected in liver (at protein level).

Its subcellular location is the cytoplasm. The protein localises to the nucleus. In terms of biological role, non-catalytic component of the 20S core proteasome complex involved in the proteolytic degradation of most intracellular proteins. This complex plays numerous essential roles within the cell by associating with different regulatory particles. Associated with two 19S regulatory particles, forms the 26S proteasome and thus participates in the ATP-dependent degradation of ubiquitinated proteins. The 26S proteasome plays a key role in the maintenance of protein homeostasis by removing misfolded or damaged proteins that could impair cellular functions, and by removing proteins whose functions are no longer required. Associated with the PA200 or PA28, the 20S proteasome mediates ubiquitin-independent protein degradation. This type of proteolysis is required in several pathways including spermatogenesis (20S-PA200 complex) or generation of a subset of MHC class I-presented antigenic peptides (20S-PA28 complex). In Mus musculus (Mouse), this protein is Proteasome subunit beta type-1 (Psmb1).